The chain runs to 156 residues: Persephin (156 aa).

Positions 1-21 (MAAGRLRILFLLLLSLHLGLG) are cleaved as a signal peptide. 3 cysteine pairs are disulfide-bonded: cysteine 66/cysteine 124, cysteine 93/cysteine 152, and cysteine 97/cysteine 154.

Belongs to the TGF-beta family. GDNF subfamily. Homodimer; disulfide-linked. Interacts with GFRA4 coreceptor and RET: forms a 2:2:2 ternary complex composed of PSPN ligand, GFRA4 and RET receptor. Expressed at low levels in substantia nigra. Cochlea.

It localises to the secreted. Growth factor that exhibits neurotrophic activity on mesencephalic dopaminergic and motor neurons. Acts by binding to its coreceptor, GFRA4, leading to autophosphorylation and activation of the RET receptor. The sequence is that of Persephin from Rattus norvegicus (Rat).